Consider the following 156-residue polypeptide: Lipoprotein signal peptidase (156 aa).

The next 3 helical transmembrane spans lie at 37–57 (VIPGFFNLVHVVNKGAAFGFL), 68–88 (FFVVVTIIALGAIGMLLKSAE), and 95–115 (ILGLGFVLGGAIGNLIDRILY). Active-site residues include aspartate 120 and aspartate 138. Residues 133–153 (AFNVADIAICLGAFAMIVSFY) form a helical membrane-spanning segment.

It belongs to the peptidase A8 family.

The protein localises to the cell inner membrane. The enzyme catalyses Release of signal peptides from bacterial membrane prolipoproteins. Hydrolyzes -Xaa-Yaa-Zaa-|-(S,diacylglyceryl)Cys-, in which Xaa is hydrophobic (preferably Leu), and Yaa (Ala or Ser) and Zaa (Gly or Ala) have small, neutral side chains.. It participates in protein modification; lipoprotein biosynthesis (signal peptide cleavage). Functionally, this protein specifically catalyzes the removal of signal peptides from prolipoproteins. This Maridesulfovibrio salexigens (strain ATCC 14822 / DSM 2638 / NCIMB 8403 / VKM B-1763) (Desulfovibrio salexigens) protein is Lipoprotein signal peptidase.